A 261-amino-acid polypeptide reads, in one-letter code: MNNLFPFLALDKIALQLGPLAIHWYAIFIVGGAALAVWLACKEAPKRNIKVDDIIDFVLFAFPLGIVGARLYYVIFQWSYYSQHPSQIIAIWDGGGAIYGSLIAGAIVLFVFSYYRMIHPLDLLDITIPGVFLAQAMGRWGNFVNQEAYGKIVSNLDWLPPFIRNQMFIEGHYRMPTFLFESIGTLSGFILVMVFRHRIKGLKRGDIFSSYLVWYGAVRFIVEGMRTDSLMLGPARVSQWLSVLLVILGIILFVYRRIKKN.

Helical transmembrane passes span 20–40 (LAIHWYAIFIVGGAALAVWLA), 54–74 (IIDFVLFAFPLGIVGARLYYV), and 88–108 (IIAIWDGGGAIYGSLIAGAIV). Arg139 serves as a coordination point for a 1,2-diacyl-sn-glycero-3-phospho-(1'-sn-glycerol). A run of 2 helical transmembrane segments spans residues 175–195 (MPTFLFESIGTLSGFILVMVF) and 235–255 (ARVSQWLSVLLVILGIILFVY).

This sequence belongs to the Lgt family.

The protein resides in the cell membrane. It carries out the reaction L-cysteinyl-[prolipoprotein] + a 1,2-diacyl-sn-glycero-3-phospho-(1'-sn-glycerol) = an S-1,2-diacyl-sn-glyceryl-L-cysteinyl-[prolipoprotein] + sn-glycerol 1-phosphate + H(+). Its pathway is protein modification; lipoprotein biosynthesis (diacylglyceryl transfer). In terms of biological role, catalyzes the transfer of the diacylglyceryl group from phosphatidylglycerol to the sulfhydryl group of the N-terminal cysteine of a prolipoprotein, the first step in the formation of mature lipoproteins. The polypeptide is Phosphatidylglycerol--prolipoprotein diacylglyceryl transferase (Lactococcus lactis subsp. cremoris (strain MG1363)).